Reading from the N-terminus, the 426-residue chain is 3-phosphoshikimate 1-carboxyvinyltransferase (426 aa).

3-phosphoshikimate contacts are provided by K22, S23, and R27. K22 lines the phosphoenolpyruvate pocket. Residues G96 and R124 each contribute to the phosphoenolpyruvate site. Positions 170, 171, 172, 198, 314, 337, and 341 each coordinate 3-phosphoshikimate. Q172 is a phosphoenolpyruvate binding site. The active-site Proton acceptor is the D314. Residues R345, R387, and K412 each coordinate phosphoenolpyruvate.

Belongs to the EPSP synthase family. In terms of assembly, monomer.

Its subcellular location is the cytoplasm. The catalysed reaction is 3-phosphoshikimate + phosphoenolpyruvate = 5-O-(1-carboxyvinyl)-3-phosphoshikimate + phosphate. The protein operates within metabolic intermediate biosynthesis; chorismate biosynthesis; chorismate from D-erythrose 4-phosphate and phosphoenolpyruvate: step 6/7. Functionally, catalyzes the transfer of the enolpyruvyl moiety of phosphoenolpyruvate (PEP) to the 5-hydroxyl of shikimate-3-phosphate (S3P) to produce enolpyruvyl shikimate-3-phosphate and inorganic phosphate. In Colwellia psychrerythraea (strain 34H / ATCC BAA-681) (Vibrio psychroerythus), this protein is 3-phosphoshikimate 1-carboxyvinyltransferase.